A 158-amino-acid polypeptide reads, in one-letter code: Endoribonuclease YbeY (158 aa).

The Zn(2+) site is built by His-120, His-124, and His-130.

It belongs to the endoribonuclease YbeY family. Requires Zn(2+) as cofactor.

It is found in the cytoplasm. Single strand-specific metallo-endoribonuclease involved in late-stage 70S ribosome quality control and in maturation of the 3' terminus of the 16S rRNA. The sequence is that of Endoribonuclease YbeY from Spiroplasma citri.